The following is a 621-amino-acid chain: Laccase-2 (621 aa).

Positions 1–23 are cleaved as a signal peptide; the sequence is MMKSFFSAAALLLGLVAPSAVLA. A propeptide spanning residues 24 to 48 is cleaved from the precursor; it reads APSLPGVPREVTRDLLRPVEERQSS. Cys-49 and Cys-57 form a disulfide bridge. Plastocyanin-like domains are found at residues 78-201 and 210-367; these read TRTY…IVVN and IDLG…LPTN. The N-linked (GlcNAc...) asparagine glycan is linked to Asn-133. Cu cation-binding residues include His-138, His-140, His-183, and His-185. 2 disulfide bridges follow: Cys-159–Cys-586 and Cys-343–Cys-377. Residues Asn-261, Asn-276, Asn-289, Asn-325, and Asn-334 are each glycosylated (N-linked (GlcNAc...) asparagine). Asn-401, Asn-421, and Asn-441 each carry an N-linked (GlcNAc...) asparagine glycan. One can recognise a Plastocyanin-like 3 domain in the interval 430–566; sequence DKPIVDYVIA…GGLSVQYLER (137 aa). Cu cation is bound by residues His-476, His-479, His-481, His-548, Cys-549, His-550, and His-554. The propeptide occupies 606 to 621; the sequence is KVKKWVGEHPDWYIKN.

The protein belongs to the multicopper oxidase family. Monomer. The cofactor is Cu cation. Proteolytically processed at both its N-terminus and its C-terminus.

The protein localises to the secreted. It catalyses the reaction 4 hydroquinone + O2 = 4 benzosemiquinone + 2 H2O. In terms of biological role, probably involved in lignin degradation and in the detoxification of lignin-derived products in its natural habitat (herbivorous dung), which is rich in lignin of grasses and straw. Probably involved in melanin synthesis and in perithecia development. The polypeptide is Laccase-2 (LAC2) (Podospora anserina (Pleurage anserina)).